The primary structure comprises 927 residues: Lysine-specific demethylase JMJ28 (927 aa).

Residues 7 to 52 (VPDEFRCNRSDGKQWRCKRRALEGKKMCESHHSQQSLKRSKQKVAE) form the WRC domain. The short motif at 30–37 (GKKMCESH) is the Nuclear localization signal 1 element. Residues 30-92 (GKKMCESHHS…RLGKSKRKRV (63 aa)) form a disordered region. Over residues 80–91 (RSKRLGKSKRKR) the composition is skewed to basic residues. Residues 127 to 134 (EKRKRLPN) carry the Nuclear localization signal 2 motif. The Zn(2+) site is built by Cys-227, Cys-230, Cys-241, Cys-244, Cys-250, Cys-253, Cys-269, and Cys-272. An RING-type; degenerate zinc finger spans residues 227 to 273 (CHWCGTRGFGDLISCLSCEREFFCIDCIEKRNKGSKEEVEKKCPVCR). The segment covering 330-339 (ENDAEKKEGN) has biased composition (basic and acidic residues). Disordered stretches follow at residues 330-359 (ENDA…QPCS) and 701-736 (RSKN…SQHC). Residues 601–881 (FPNHYAEILN…ESIKRVKELN (281 aa)) form the JmjC domain.

Belongs to the JARID1 histone demethylase family. In terms of assembly, interacts with the FBH transcription factors FBH1, FBH2, FBH3 and FBH4. The cofactor is Fe(2+). Expressed in inflorescences, flowers, roots, siliques, leaves and stems, especially in the vasculature (mainly phloem), with highest levels in floral organs. Present at high levels in flowers, shoot apex and young seeds, but observed at low levels in dry seeds, root apex and anthers.

It is found in the nucleus. Functionally, may function as histone H3 lysine demethylase and be involved in regulation of gene expression. Regulates flowering time by promoting CONSTANS (CO) and CONSTANS-LIKE genes (e.g. COL2 and COL5) expression via interaction with FBH transcription factors (FBH1, FBH2, FBH3 and FBH4) at their loci to remove H3K9me2 repressive histone marks. Also modulates the expression of several developmental genes such as MYB30, TFS1, AGL6 and RVE2. This chain is Lysine-specific demethylase JMJ28, found in Arabidopsis thaliana (Mouse-ear cress).